The following is a 31-amino-acid chain: Fibrinogen beta chain (31 aa).

The segment covering 1–10 (HYYDDTDEEE) has biased composition (acidic residues). Residues 1-31 (HYYDDTDEEERIVSTVDARGHRPLDKKREEA) are disordered. Tyr2 is subject to Sulfotyrosine; partial. Sulfotyrosine is present on Tyr3. Residues 18 to 31 (ARGHRPLDKKREEA) show a composition bias toward basic and acidic residues.

As to quaternary structure, heterohexamer; disulfide linked. Contains 2 sets of 3 non-identical chains (alpha, beta and gamma). The 2 heterotrimers are in head to head conformation with the N-termini in a small central domain. Post-translationally, conversion of fibrinogen to fibrin is triggered by thrombin, which cleaves fibrinopeptides A and B from alpha and beta chains, and thus exposes the N-terminal polymerization sites responsible for the formation of the soft clot.

Its subcellular location is the secreted. Functionally, cleaved by the protease thrombin to yield monomers which, together with fibrinogen alpha (FGA) and fibrinogen gamma (FGG), polymerize to form an insoluble fibrin matrix. Fibrin has a major function in hemostasis as one of the primary components of blood clots. In addition, functions during the early stages of wound repair to stabilize the lesion and guide cell migration during re-epithelialization. Was originally thought to be essential for platelet aggregation, based on in vitro studies using anticoagulated blood. However subsequent studies have shown that it is not absolutely required for thrombus formation in vivo. Enhances expression of SELP in activated platelets. Maternal fibrinogen is essential for successful pregnancy. Fibrin deposition is also associated with infection, where it protects against IFNG-mediated hemorrhage. May also facilitate the antibacterial immune response via both innate and T-cell mediated pathways. In Canis lupus familiaris (Dog), this protein is Fibrinogen beta chain (FGB).